We begin with the raw amino-acid sequence, 332 residues long: L-lactate dehydrogenase A chain (332 aa).

Ala2 is subject to N-acetylalanine. Position 5 is an N6-acetyllysine; alternate (Lys5). An N6-succinyllysine; alternate modification is found at Lys5. Lys14 bears the N6-acetyllysine mark. Residue 29–57 (GAVGMACAISILMKDLADEVALVDVMEDK) participates in NAD(+) binding. At Lys57 the chain carries N6-acetyllysine; alternate. A Glycyl lysine isopeptide (Lys-Gly) (interchain with G-Cter in SUMO2); alternate cross-link involves residue Lys57. Lys81 is subject to N6-acetyllysine. Arg106 provides a ligand contact to substrate. Residue Lys118 is modified to N6-acetyllysine; alternate. Lys118 is modified (N6-succinyllysine; alternate). Lys126 bears the N6-acetyllysine mark. An NAD(+)-binding site is contributed by Asn138. 2 residues coordinate substrate: Asn138 and Arg169. The Proton acceptor role is filled by His193. N6-acetyllysine is present on residues Lys224 and Lys232. Phosphotyrosine is present on Tyr239. Lys243 carries the N6-acetyllysine modification. Substrate is bound at residue Thr248. Thr309 is subject to Phosphothreonine. Lys318 is subject to N6-acetyllysine; alternate. Lys318 bears the N6-succinyllysine; alternate mark. Position 322 is a phosphothreonine (Thr322).

The protein belongs to the LDH/MDH superfamily. LDH family. As to quaternary structure, homotetramer. Interacts with PTEN upstream reading frame protein MP31. ISGylated.

The protein localises to the cytoplasm. It carries out the reaction (S)-lactate + NAD(+) = pyruvate + NADH + H(+). It participates in fermentation; pyruvate fermentation to lactate; (S)-lactate from pyruvate: step 1/1. Interconverts simultaneously and stereospecifically pyruvate and lactate with concomitant interconversion of NADH and NAD(+). The sequence is that of L-lactate dehydrogenase A chain (LDHA) from Bos taurus (Bovine).